The sequence spans 985 residues: Bifunctional glutamine synthetase adenylyltransferase/adenylyl-removing enzyme (985 aa).

An adenylyl removase region spans residues 1–460 (MSLPSLADFP…HFRQVIADPD (460 aa)). The segment at 476–985 (GGEWLPLWEE…MRIWAQMGLS (510 aa)) is adenylyl transferase.

This sequence belongs to the GlnE family. Mg(2+) serves as cofactor.

It catalyses the reaction [glutamine synthetase]-O(4)-(5'-adenylyl)-L-tyrosine + phosphate = [glutamine synthetase]-L-tyrosine + ADP. It carries out the reaction [glutamine synthetase]-L-tyrosine + ATP = [glutamine synthetase]-O(4)-(5'-adenylyl)-L-tyrosine + diphosphate. Involved in the regulation of glutamine synthetase GlnA, a key enzyme in the process to assimilate ammonia. When cellular nitrogen levels are high, the C-terminal adenylyl transferase (AT) inactivates GlnA by covalent transfer of an adenylyl group from ATP to specific tyrosine residue of GlnA, thus reducing its activity. Conversely, when nitrogen levels are low, the N-terminal adenylyl removase (AR) activates GlnA by removing the adenylyl group by phosphorolysis, increasing its activity. The regulatory region of GlnE binds the signal transduction protein PII (GlnB) which indicates the nitrogen status of the cell. This is Bifunctional glutamine synthetase adenylyltransferase/adenylyl-removing enzyme from Pseudomonas syringae pv. tomato (strain ATCC BAA-871 / DC3000).